The sequence spans 819 residues: Glycine-rich domain-containing protein 1 (819 aa).

Its function is as follows. Plays a regulatory role in abscisic acid (ABA) signaling and tolerance to abiotic stress during germination. May be involved in the regulation of the ABI transcriptional factors. The sequence is that of Glycine-rich domain-containing protein 1 from Arabidopsis thaliana (Mouse-ear cress).